Consider the following 132-residue polypeptide: Small ribosomal subunit protein uS8 (132 aa).

This sequence belongs to the universal ribosomal protein uS8 family. As to quaternary structure, part of the 30S ribosomal subunit. Contacts proteins S5 and S12.

One of the primary rRNA binding proteins, it binds directly to 16S rRNA central domain where it helps coordinate assembly of the platform of the 30S subunit. This is Small ribosomal subunit protein uS8 from Clostridium acetobutylicum (strain ATCC 824 / DSM 792 / JCM 1419 / IAM 19013 / LMG 5710 / NBRC 13948 / NRRL B-527 / VKM B-1787 / 2291 / W).